Reading from the N-terminus, the 351-residue chain is ADP-glucose phosphorylase (351 aa).

A disordered region spans residues 1–63 (MTSPSHASDR…QNPNPKPSSC (63 aa)). 41–44 (RAKR) provides a ligand contact to ADP-alpha-D-glucose. Zn(2+) contacts are provided by C63 and C66. ADP-alpha-D-glucose is bound by residues 72–74 (ECA) and N94. H133 is a binding site for Zn(2+). Residues N173 and 179 to 182 (GASM) each bind ADP-alpha-D-glucose. H184 is a Zn(2+) binding site. The Tele-AMP-histidine intermediate role is filled by H186. Q188 provides a ligand contact to ADP-alpha-D-glucose. 4 residues coordinate Zn(2+): C216, C219, H255, and H310. Residues G321 and 325-326 (FE) each bind ADP-alpha-D-glucose.

It belongs to the galactose-1-phosphate uridylyltransferase type 1 family. As to quaternary structure, homodimer. It depends on Zn(2+) as a cofactor.

The catalysed reaction is alpha-D-glucose 1-phosphate + ADP + H(+) = ADP-alpha-D-glucose + phosphate. Catalyzes the conversion of ADP-glucose and inorganic phosphate (Pi) into glucose-1-phosphate and ADP. Does not possess galactose-1-phosphate uridylyltransferase activity. The protein is ADP-glucose phosphorylase of Arabidopsis thaliana (Mouse-ear cress).